The primary structure comprises 149 residues: Arginine repressor (149 aa).

This sequence belongs to the ArgR family.

The protein resides in the cytoplasm. It functions in the pathway amino-acid biosynthesis; L-arginine biosynthesis [regulation]. Its function is as follows. Regulates arginine biosynthesis genes. The polypeptide is Arginine repressor (Chlorobium phaeobacteroides (strain DSM 266 / SMG 266 / 2430)).